The following is a 213-amino-acid chain: Imidazole glycerol phosphate synthase subunit HisH (213 aa).

One can recognise a Glutamine amidotransferase type-1 domain in the interval 4–211 (NLGLIDYGMG…LTWLRNGAEP (208 aa)). Catalysis depends on cysteine 82, which acts as the Nucleophile. Catalysis depends on residues histidine 186 and glutamate 188.

As to quaternary structure, heterodimer of HisH and HisF.

It is found in the cytoplasm. It catalyses the reaction 5-[(5-phospho-1-deoxy-D-ribulos-1-ylimino)methylamino]-1-(5-phospho-beta-D-ribosyl)imidazole-4-carboxamide + L-glutamine = D-erythro-1-(imidazol-4-yl)glycerol 3-phosphate + 5-amino-1-(5-phospho-beta-D-ribosyl)imidazole-4-carboxamide + L-glutamate + H(+). It carries out the reaction L-glutamine + H2O = L-glutamate + NH4(+). It functions in the pathway amino-acid biosynthesis; L-histidine biosynthesis; L-histidine from 5-phospho-alpha-D-ribose 1-diphosphate: step 5/9. Functionally, IGPS catalyzes the conversion of PRFAR and glutamine to IGP, AICAR and glutamate. The HisH subunit catalyzes the hydrolysis of glutamine to glutamate and ammonia as part of the synthesis of IGP and AICAR. The resulting ammonia molecule is channeled to the active site of HisF. This chain is Imidazole glycerol phosphate synthase subunit HisH, found in Synechococcus sp. (strain CC9605).